The chain runs to 216 residues: Thymidylate kinase (216 aa).

Residue 9–16 (GIEGSGKT) coordinates ATP.

Belongs to the thymidylate kinase family.

It catalyses the reaction dTMP + ATP = dTDP + ADP. Phosphorylation of dTMP to form dTDP in both de novo and salvage pathways of dTTP synthesis. The sequence is that of Thymidylate kinase from Syntrophotalea carbinolica (strain DSM 2380 / NBRC 103641 / GraBd1) (Pelobacter carbinolicus).